Here is a 464-residue protein sequence, read N- to C-terminus: Glutamate--tRNA ligase (464 aa).

The short motif at proline 9 to glycine 19 is the 'HIGH' region element. The short motif at lysine 242–arginine 246 is the 'KMSKS' region element. Lysine 245 is an ATP binding site.

Belongs to the class-I aminoacyl-tRNA synthetase family. Glutamate--tRNA ligase type 1 subfamily. As to quaternary structure, monomer.

Its subcellular location is the cytoplasm. The enzyme catalyses tRNA(Glu) + L-glutamate + ATP = L-glutamyl-tRNA(Glu) + AMP + diphosphate. In terms of biological role, catalyzes the attachment of glutamate to tRNA(Glu) in a two-step reaction: glutamate is first activated by ATP to form Glu-AMP and then transferred to the acceptor end of tRNA(Glu). In Neisseria meningitidis serogroup A / serotype 4A (strain DSM 15465 / Z2491), this protein is Glutamate--tRNA ligase.